Reading from the N-terminus, the 190-residue chain is Isopentenyl-diphosphate Delta-isomerase (190 aa).

The Mn(2+) site is built by His27 and His34. One can recognise a Nudix hydrolase domain in the interval 32 to 166 (ALHLAFSCHV…PWAFSPWLTL (135 aa)). Cys69 is an active-site residue. His71 provides a ligand contact to Mn(2+). Glu89 is a binding site for Mg(2+). The Mn(2+) site is built by Glu116 and Glu118. Glu118 is an active-site residue.

The protein belongs to the IPP isomerase type 1 family. Mg(2+) serves as cofactor. Requires Mn(2+) as cofactor.

The protein localises to the cytoplasm. It catalyses the reaction isopentenyl diphosphate = dimethylallyl diphosphate. Its pathway is isoprenoid biosynthesis; dimethylallyl diphosphate biosynthesis; dimethylallyl diphosphate from isopentenyl diphosphate: step 1/1. Catalyzes the 1,3-allylic rearrangement of the homoallylic substrate isopentenyl (IPP) to its highly electrophilic allylic isomer, dimethylallyl diphosphate (DMAPP). The sequence is that of Isopentenyl-diphosphate Delta-isomerase from Clavibacter sepedonicus (Clavibacter michiganensis subsp. sepedonicus).